The following is a 576-amino-acid chain: RING finger and SPRY domain-containing protein 1 (576 aa).

The signal sequence occupies residues 1-16 (MIVFGWAVFLASRSLG). Ser-50 carries the post-translational modification Phosphoserine. The disordered stretch occupies residues 50–99 (SGTDDSVDTQQQQAENSAVPTADTRSQPRDPVRPPRRGRGPHEPRRKKQN). The segment covering 57–68 (DTQQQQAENSAV) has biased composition (polar residues). A compositionally biased stretch (basic residues) spans 83–97 (PPRRGRGPHEPRRKK). In terms of domain architecture, B30.2/SPRY spans 300 to 483 (LFLKEGRQLT…CEFNFGAKPF (184 aa)). A glycan (N-linked (GlcNAc...) asparagine) is linked at Asn-314. An RING-type zinc finger spans residues 527–562 (CSLCCDEVADTQLKPCGHSDLCMDCALQLETCPLCR).

The protein resides in the secreted. The chain is RING finger and SPRY domain-containing protein 1 (RSPRY1) from Homo sapiens (Human).